The sequence spans 329 residues: Ketol-acid reductoisomerase (NADP(+)) (329 aa).

In terms of domain architecture, KARI N-terminal Rossmann spans 1-181 (MKVYYEQDAN…GGTRSGVIET (181 aa)). Residues 24 to 27 (YGSQ), R47, and 82 to 85 (DQYQ) contribute to the NADP(+) site. H107 is an active-site residue. G133 lines the NADP(+) pocket. The 146-residue stretch at 182–327 (TFREETETDL…ARLRSMMPWL (146 aa)) folds into the KARI C-terminal knotted domain. The Mg(2+) site is built by D190, E194, E226, and E230. Residue S251 coordinates substrate.

The protein belongs to the ketol-acid reductoisomerase family. It depends on Mg(2+) as a cofactor.

The catalysed reaction is (2R)-2,3-dihydroxy-3-methylbutanoate + NADP(+) = (2S)-2-acetolactate + NADPH + H(+). It carries out the reaction (2R,3R)-2,3-dihydroxy-3-methylpentanoate + NADP(+) = (S)-2-ethyl-2-hydroxy-3-oxobutanoate + NADPH + H(+). The protein operates within amino-acid biosynthesis; L-isoleucine biosynthesis; L-isoleucine from 2-oxobutanoate: step 2/4. It participates in amino-acid biosynthesis; L-valine biosynthesis; L-valine from pyruvate: step 2/4. Functionally, involved in the biosynthesis of branched-chain amino acids (BCAA). Catalyzes an alkyl-migration followed by a ketol-acid reduction of (S)-2-acetolactate (S2AL) to yield (R)-2,3-dihydroxy-isovalerate. In the isomerase reaction, S2AL is rearranged via a Mg-dependent methyl migration to produce 3-hydroxy-3-methyl-2-ketobutyrate (HMKB). In the reductase reaction, this 2-ketoacid undergoes a metal-dependent reduction by NADPH to yield (R)-2,3-dihydroxy-isovalerate. This Oleidesulfovibrio alaskensis (strain ATCC BAA-1058 / DSM 17464 / G20) (Desulfovibrio alaskensis) protein is Ketol-acid reductoisomerase (NADP(+)).